The primary structure comprises 277 residues: Ribonuclease HII (277 aa).

Residues 1 to 32 are disordered; sequence MIRNQANKPGRAKAATAARKSPLTKSAAKPAA. Low complexity predominate over residues 20 to 32; it reads KSPLTKSAAKPAA. The RNase H type-2 domain occupies 64–252; sequence WPVAGCDEAG…VVAARRKHQP (189 aa). Residues aspartate 70, glutamate 71, and aspartate 161 each contribute to the a divalent metal cation site.

Belongs to the RNase HII family. It depends on Mn(2+) as a cofactor. Mg(2+) is required as a cofactor.

Its subcellular location is the cytoplasm. The catalysed reaction is Endonucleolytic cleavage to 5'-phosphomonoester.. In terms of biological role, endonuclease that specifically degrades the RNA of RNA-DNA hybrids. This chain is Ribonuclease HII, found in Bradyrhizobium sp. (strain ORS 278).